The following is an 800-amino-acid chain: DNA topoisomerase 4 subunit A (800 aa).

The Topo IIA-type catalytic domain occupies 31-495 (LPDVRDGLKP…EIEEIKIDKE (465 aa)). Tyr-119 functions as the O-(5'-phospho-DNA)-tyrosine intermediate in the catalytic mechanism.

It belongs to the type II topoisomerase GyrA/ParC subunit family. ParC type 2 subfamily. In terms of assembly, heterotetramer composed of ParC and ParE.

It localises to the cell membrane. The catalysed reaction is ATP-dependent breakage, passage and rejoining of double-stranded DNA.. Functionally, topoisomerase IV is essential for chromosome segregation. It relaxes supercoiled DNA. Performs the decatenation events required during the replication of a circular DNA molecule. The chain is DNA topoisomerase 4 subunit A from Staphylococcus aureus (strain NCTC 8325 / PS 47).